A 346-amino-acid chain; its full sequence is Partitioning defective 6 homolog alpha (346 aa).

The interval M1–G116 is interaction with PRKCI and PRKCZ. The PB1 domain maps to I15 to R95. Positions R126–N253 are interaction with PARD3 and CDC42. The Pseudo-CRIB domain occupies I133–L150. Residues R157–N250 form the PDZ domain. The disordered stretch occupies residues R257–L346. S278 and S345 each carry phosphoserine.

Belongs to the PAR6 family. In terms of assembly, interacts with MAP2K5. Interacts with PARD3. Interacts with GTP-bound forms of CDC42, RHOQ/TC10 and RAC1. Interacts with the N-terminal part of PRKCI and PRKCZ. Part of a complex with PARD3, CDC42 or RAC1 and PRKCI or PRKCZ. Part of a complex with LLGL1 and PRKCI. Interacts with human T-cell leukemia virus type I TAX protein. Interacts with PALS1 and CRB3. Interacts with TGFBR1; involved in TGF-beta induced epithelial to mesenchymal transition. Interacts with ECT2 ('Thr-359' phosphorylated form) and PRKCI. Interacts with DCTN1 and PCM1. In terms of processing, phosphorylated by the TGF-beta receptor. Ubiquitinated by the SCF(FBXO31) complex, leading to its proteasomal degradation. In terms of tissue distribution, expressed in pancreas, skeletal muscle, brain and heart. Weakly expressed in kidney and placenta.

It is found in the cytoplasm. It localises to the cell membrane. The protein localises to the cell projection. Its subcellular location is the ruffle. The protein resides in the cell junction. It is found in the tight junction. It localises to the cytoskeleton. The protein localises to the microtubule organizing center. Its subcellular location is the centrosome. The protein resides in the centriolar satellite. In terms of biological role, adapter protein involved in asymmetrical cell division and cell polarization processes. Probably involved in the formation of epithelial tight junctions. Association with PARD3 may prevent the interaction of PARD3 with F11R/JAM1, thereby preventing tight junction assembly. The PARD6-PARD3 complex links GTP-bound Rho small GTPases to atypical protein kinase C proteins. Regulates centrosome organization and function. Essential for the centrosomal recruitment of key proteins that control centrosomal microtubule organization. The sequence is that of Partitioning defective 6 homolog alpha (PARD6A) from Homo sapiens (Human).